The chain runs to 536 residues: B3 domain-containing protein Os03g0619800 (536 aa).

Positions 26 to 119 (MRCFLRRMAA…RYEVLILDSD (94 aa)) form a DNA-binding region, TF-B3 1. The interval 138–199 (DKTVDPVDSS…VEPQTPSGSD (62 aa)) is disordered. Composition is skewed to low complexity over residues 145-160 (DSSG…SSRS) and 171-183 (SSSE…SPSG). A DNA-binding region (TF-B3 2) is located at residues 231–330 (VAVMKKCNLQ…AFTVHLLQAE (100 aa)). The segment at 335 to 396 (RDGTDVHKIG…SDGPSEPPYI (62 aa)) is disordered. Over residues 344–355 (GSSQNKRNSKMA) the composition is skewed to polar residues. A compositionally biased stretch (basic and acidic residues) spans 372–382 (SNKHGVSHESL). Positions 429–529 (ISKLAGSGGK…TMEVHIISNL (101 aa)) form a DNA-binding region, TF-B3 3.

The protein localises to the nucleus. In Oryza sativa subsp. japonica (Rice), this protein is B3 domain-containing protein Os03g0619800.